Here is a 249-residue protein sequence, read N- to C-terminus: uncharacterized protein (249 aa).

An S4 RNA-binding domain is found at 7-64 (PRVHVFLAEKGVGSRRFCEELIRKKLVRVNNTIAKLGDKVTLGDRIIYKKQIFVFKDF). Asp-112 (nucleophile) is an active-site residue.

This sequence belongs to the pseudouridine synthase RsuA family.

It carries out the reaction a uridine in RNA = a pseudouridine in RNA. This is an uncharacterized protein from Borreliella burgdorferi (strain ATCC 35210 / DSM 4680 / CIP 102532 / B31) (Borrelia burgdorferi).